The following is a 692-amino-acid chain: MDQGYGGYGAWSAGPANTQGAYGTGVASWQGYENYNYYGAQNTSVTTGATYSYGPASWEAAKANDGGLAAGAPAMHMASYGPEPCTDNSDSLIAKINQRLDMMSKEGGRGGSGGGGEGIQDRESSFRFQPFESYDSRPCLPEHNPYRPSYSYDYEFDLGSDRNGSFGGQYSECRDPARERGSLDGFMRGRGQGRFQDRSNPGTFMRSDPFVPPAASSEPLSTPWNELNYVGGRGLGGPSPSRPPPSLFSQSMAPDYGVMGMQGAGGYDSTMPYGCGRSQPRMRDRDRPKRRGFDRFGPDGTGRKRKQFQLYEEPDTKLARVDSEGDFSENDDAAGDFRSGDEEFKGEDELCDSGRQRGEKEDEDEDVKKRREKQRRRDRTRDRAADRIQFACSVCKFRSFDDEEIQKHLQSKFHKETLRFISTKLPDKTVEFLQEYIVNRNKKIEKRRQELMEKETAKPKPDPFKGIGQEHFFKKIEAAHCLACDMLIPAQPQLLQRHLHSVDHNHNRRLAAEQFKKTSLHVAKSVLNNRHIVKMLEKYLKGEDPFTSETVDPEMEGDDNLGGEDKKETPEEVAADVLAEVITAAVRAVDGEGAPAPESSGEPAEDEGPTDTAEAGSDPQAEQLLEEQVPCGTAHEKGVPKARSEAAEAGNGAETMAAEAESAQTRVAPAPAAADAEVEQTDAESKDAVPTE.

Residues 1 to 195 (MDQGYGGYGA…FMRGRGQGRF (195 aa)) form an interaction with MCM2 region. An interaction with DPY30 region spans residues 1 to 210 (MDQGYGGYGA…PGTFMRSDPF (210 aa)). Arginine 109 carries the asymmetric dimethylarginine; alternate modification. The residue at position 109 (arginine 109) is an Omega-N-methylarginine; alternate. Positions 109-201 (RGGSGGGGEG…QGRFQDRSNP (93 aa)) are interaction with DDX5. Serine 112 is subject to Phosphoserine. Disordered stretches follow at residues 168–203 (GQYS…NPGT), 231–254 (GGRG…SMAP), and 269–382 (STMP…RTRD). The span at 172-182 (ECRDPARERGS) shows a compositional bias: basic and acidic residues. Residue serine 199 is modified to Phosphoserine. Arginine 233 and arginine 277 each carry omega-N-methylarginine. Composition is skewed to basic and acidic residues over residues 281–297 (RMRD…DRFG) and 314–323 (PDTKLARVDS). A Bipartite nuclear localization signal motif is present at residues 289–306 (KRRGFDRFGPDGTGRKRK). Residue lysine 317 forms a Glycyl lysine isopeptide (Lys-Gly) (interchain with G-Cter in SUMO2) linkage. 3 positions are modified to phosphoserine: serine 323, serine 328, and serine 339. Acidic residues predominate over residues 324–334 (EGDFSENDDAA). Positions 387 to 450 (RIQFACSVCK…NKKIEKRRQE (64 aa)) are involved in chromatin-binding. C2H2 AKAP95-type zinc fingers lie at residues 392-414 (CSVC…SKFH) and 481-504 (CLAC…SVDH). Positions 525 to 569 (SVLNNRHIVKMLEKYLKGEDPFTSETVDPEMEGDDNLGGEDKKET) are involved in condensin complex recruitment. Residues 545 to 571 (PFTSETVDPEMEGDDNLGGEDKKETPE) are disordered. A compositionally biased stretch (acidic residues) spans 551–562 (VDPEMEGDDNLG). Lysine 567 is covalently cross-linked (Glycyl lysine isopeptide (Lys-Gly) (interchain with G-Cter in SUMO2)). Residues 572–589 (EVAADVLAEVITAAVRAV) form an RII-binding region. The tract at residues 576 to 593 (DVLAEVITAAVRAVDGEG) is required for interaction with MYCBP. The interval 592-692 (EGAPAPESSG…AESKDAVPTE (101 aa)) is disordered. A compositionally biased stretch (basic and acidic residues) spans 634–646 (AHEKGVPKARSEA). Serine 662 bears the Phosphoserine mark. The segment covering 663 to 675 (AQTRVAPAPAAAD) has biased composition (low complexity). A compositionally biased stretch (basic and acidic residues) spans 683-692 (AESKDAVPTE). Serine 685 carries the phosphoserine modification.

The protein belongs to the AKAP95 family. Binds to the PKA RII-alpha regulatory subunit PRKAR2A (phosphorylated at 'Thr-54') during mitosis. Interacts (via C-terminus) with FIGN. Interacts with NCAPD2, CCND1, MCM2, RPS6KA1, PDE4A. Interacts with CCND3, CCNE1, DDX5, CASP3. Interacts with NFKB1; detetcted in the cytoplasm. Interacts with MYCBP; MYCBP is translocated to the nucleus and the interaction prevents the association of the PKA catalytic subunit leading to suppression of PKA activity. Interacts with DPY30; mediating AKAP8 association with at least the MLL4/WBP7 HMT complex. Interacts with HDAC3; increased during mitosis. Interacts with GJA1; in the nucleus and in the nuclear membrane; the nuclear association increases with progress of cell cycle G1, S and G2 phase and decreases in M phase. In terms of processing, phosphorylated on tyrosine residues probably by SRC subfamily protein kinases; multiple phosphorylation is leading to dissociation from nuclear structures implicated in chromatin structural changes. Highly expressed in heart, liver, skeletal muscle, kidney and pancreas. Expressed in mature dendritic cells.

It localises to the nucleus. The protein resides in the nucleus matrix. The protein localises to the nucleolus. Its subcellular location is the cytoplasm. Its function is as follows. Anchoring protein that mediates the subcellular compartmentation of cAMP-dependent protein kinase (PKA type II). Acts as an anchor for a PKA-signaling complex onto mitotic chromosomes, which is required for maintenance of chromosomes in a condensed form throughout mitosis. Recruits condensin complex subunit NCAPD2 to chromosomes required for chromatin condensation; the function appears to be independent from PKA-anchoring. May help to deliver cyclin D/E to CDK4 to facilitate cell cycle progression. Required for cell cycle G2/M transition and histone deacetylation during mitosis. In mitotic cells recruits HDAC3 to the vicinity of chromatin leading to deacetylation and subsequent phosphorylation at 'Ser-10' of histone H3; in this function may act redundantly with AKAP8L. Involved in nuclear retention of RPS6KA1 upon ERK activation thus inducing cell proliferation. May be involved in regulation of DNA replication by acting as scaffold for MCM2. Enhances HMT activity of the KMT2 family MLL4/WBP7 complex and is involved in transcriptional regulation. In a teratocarcinoma cell line is involved in retinoic acid-mediated induction of developmental genes implicating H3 'Lys-4' methylation. May be involved in recruitment of active CASP3 to the nucleus in apoptotic cells. May act as a carrier protein of GJA1 for its transport to the nucleus. May play a repressive role in the regulation of rDNA transcription. Preferentially binds GC-rich DNA in vitro. In cells, associates with ribosomal RNA (rRNA) chromatin, preferentially with rRNA promoter and transcribed regions. Involved in modulation of Toll-like receptor signaling. Required for the cAMP-dependent suppression of TNF-alpha in early stages of LPS-induced macrophage activation; the function probably implicates targeting of PKA to NFKB1. The chain is A-kinase anchor protein 8 (AKAP8) from Homo sapiens (Human).